Consider the following 238-residue polypeptide: uncharacterized protein (238 aa).

The next 4 helical transmembrane spans lie at 13–33, 40–60, 107–127, and 140–160; these read TLFFIYFVFLTSFCLCFFGII, GSVGQLIAKLVVIVVLTLILG, VVLILSLVLTYYLSIYAFCQV, and VISLIILIFFLSLSFFVPMAF. 4Fe-4S ferredoxin-type domains lie at 178–208 and 204–233; these read PFFQLKTNNNCVKCKLCEFKCPMQIKITEKL and ITEKLDQKECIRCFECKSSCKKDALSFSYA. [4Fe-4S] cluster contacts are provided by C188, C191, C194, C198, C213, C216, C219, and C223.

The protein resides in the cell membrane. This is an uncharacterized protein from Methanocaldococcus jannaschii (strain ATCC 43067 / DSM 2661 / JAL-1 / JCM 10045 / NBRC 100440) (Methanococcus jannaschii).